The primary structure comprises 151 residues: Deoxyuridine 5'-triphosphate nucleotidohydrolase (151 aa).

Residues 70–72 (RSG), N83, 87–89 (LID), and M97 each bind substrate.

The protein belongs to the dUTPase family. Mg(2+) serves as cofactor.

The catalysed reaction is dUTP + H2O = dUMP + diphosphate + H(+). The protein operates within pyrimidine metabolism; dUMP biosynthesis; dUMP from dCTP (dUTP route): step 2/2. Functionally, this enzyme is involved in nucleotide metabolism: it produces dUMP, the immediate precursor of thymidine nucleotides and it decreases the intracellular concentration of dUTP so that uracil cannot be incorporated into DNA. The chain is Deoxyuridine 5'-triphosphate nucleotidohydrolase from Pseudomonas putida (strain W619).